Here is a 466-residue protein sequence, read N- to C-terminus: Integrin-linked protein kinase homolog pat-4 (466 aa).

ANK repeat units lie at residues 50–79 (HAFS…RVNS), 83–112 (GDDT…DVNA), and 116–145 (HGMT…AVNV). A Protein kinase domain is found at 210 to 465 (LNLITKIAES…QIIPILERMI (256 aa)).

This sequence belongs to the protein kinase superfamily. TKL Ser/Thr protein kinase family. Interacts (via protein kinase domain) with unc-112 (via N-terminus). Interacts (via ANK repeats) with unc-97 (via first LIM domain). Interacts (via protein kinase domain) with pat-6 (via C-terminus CH domain). May form a complex with unc-112, unc-97 and pat-6. Does not interact with integrin pat-3. Component of an integrin containing attachment complex, composed of at least pat-2, pat-3, pat-4, pat-6, unc-52, unc-97 and unc-112. As to expression, expressed in body wall muscle.

It localises to the cytoplasm. It is found in the myofibril. The protein localises to the sarcomere. The protein resides in the m line. Its subcellular location is the basal cell membrane. Its function is as follows. Probable pseudokinase that acts as an adapter protein. Component of an integrin containing attachment complex, which is required for muscle development and maintenance. Involved in the assembly of dense bodies and M lines during body wall muscle development by recruiting several of their components including integrin pat-3, cpna-1, unc-89 and unc-112 to integrin-mediated attachment sites. Plays a role in distal tip cell (DTC) migration and in oocyte development probably by regulating the actin cytoskeleton. During the formation of neuromuscular junctions at the larval stage, negatively regulates membrane protrusion from body wall muscles. May be involved in thermotolerance and lifespan. The chain is Integrin-linked protein kinase homolog pat-4 from Caenorhabditis elegans.